A 250-amino-acid polypeptide reads, in one-letter code: tRNA (guanine-N(1)-)-methyltransferase (250 aa).

S-adenosyl-L-methionine-binding positions include glycine 116 and 136-141 (IGDYVL).

This sequence belongs to the RNA methyltransferase TrmD family. In terms of assembly, homodimer.

The protein localises to the cytoplasm. The enzyme catalyses guanosine(37) in tRNA + S-adenosyl-L-methionine = N(1)-methylguanosine(37) in tRNA + S-adenosyl-L-homocysteine + H(+). In terms of biological role, specifically methylates guanosine-37 in various tRNAs. The chain is tRNA (guanine-N(1)-)-methyltransferase from Pseudomonas entomophila (strain L48).